The sequence spans 336 residues: Nicotinate-nucleotide--dimethylbenzimidazole phosphoribosyltransferase (336 aa).

Glu-304 functions as the Proton acceptor in the catalytic mechanism.

The protein belongs to the CobT family.

It carries out the reaction 5,6-dimethylbenzimidazole + nicotinate beta-D-ribonucleotide = alpha-ribazole 5'-phosphate + nicotinate + H(+). Its pathway is nucleoside biosynthesis; alpha-ribazole biosynthesis; alpha-ribazole from 5,6-dimethylbenzimidazole: step 1/2. Catalyzes the synthesis of alpha-ribazole-5'-phosphate from nicotinate mononucleotide (NAMN) and 5,6-dimethylbenzimidazole (DMB). The sequence is that of Nicotinate-nucleotide--dimethylbenzimidazole phosphoribosyltransferase from Mesorhizobium japonicum (strain LMG 29417 / CECT 9101 / MAFF 303099) (Mesorhizobium loti (strain MAFF 303099)).